The sequence spans 180 residues: UPF0340 protein llmg_0465 (180 aa).

This sequence belongs to the UPF0340 family.

The chain is UPF0340 protein llmg_0465 from Lactococcus lactis subsp. cremoris (strain MG1363).